The chain runs to 3491 residues: Erythronolide synthase EryA1 (3491 aa).

Positions 1–484 (MSGPRSRTTS…TPRALAEALA (484 aa)) are loading domain. The segment at 57-372 (VFVFPGQGAQ…AAQAFTGGVA (316 aa)) is acyltransferase 1. S145 acts as the Acyl-ester intermediate; for acyltransferase 1 activity in catalysis. Residues 386-410 (PALCRSSRRPRRKTSRPSPASTGTR) are disordered. The span at 391–400 (SSRRPRRKTS) shows a compositional bias: basic residues. In terms of domain architecture, Carrier 1 spans 412-487 (RTCCERLLAV…ALAEALAAGT (76 aa)). S447 carries the post-translational modification O-(pantetheine 4'-phosphoryl)serine. The Ketosynthase family 3 (KS3) 1 domain occupies 504–928 (GEPVAVVAMA…GTNAHAIIEE (425 aa)). Module regions lie at residues 507–1958 (VAVV…AHLA) and 1982–3404 (IAIV…GFLD). C677 functions as the Acyl-thioester intermediate; for beta-ketoacyl synthase 1 activity in the catalytic mechanism. Catalysis depends on for beta-ketoacyl synthase 1 activity residues H812 and H850. Residues 1031–1352 (VFVFPGQGWQ…ALSRAFAAGV (322 aa)) form an acyltransferase 2 region. The active-site Acyl-ester intermediate; for acyltransferase 2 activity is the S1128. Residues 1613-1790 (GTVLVTGGTG…ATAVAWGTWA (178 aa)) are beta-ketoacyl reductase 1. Residues 1621 to 1624 (TGGV), 1644 to 1647 (SRSG), 1673 to 1674 (DV), K1723, and 1745 to 1746 (FS) each bind NADP(+). Y1760 (for beta-ketoacyl reductase 1 activity) is an active-site residue. Residues 1886-1961 (EALFELVRSH…TLAAHLAAEL (76 aa)) form the Carrier 2 domain. S1921 is modified (O-(pantetheine 4'-phosphoryl)serine). The Ketosynthase family 3 (KS3) 2 domain maps to 1979–2402 (DEPIAIVGMA…GTNAHVIIAE (424 aa)). The active-site Acyl-thioester intermediate; for beta-ketoacyl synthase 2 activity is the C2148. Residues H2283 and H2323 each act as for beta-ketoacyl synthase 2 activity in the active site. Positions 2508–2827 (VFVFPGQGAQ…LADAHTRGVA (320 aa)) are acyltransferase 3. The active-site Acyl-ester intermediate; for acyltransferase 3 activity is S2598. Positions 3057–3233 (GTILVTGGTA…ATSVAWGLWA (177 aa)) are beta-ketoacyl reductase 2. Residues 3065–3068 (TAGL), 3088–3091 (SRRG), 3117–3118 (DV), K3168, and 3188–3189 (FS) each bind NADP(+). Residue Y3203 is the For beta-ketoacyl reductase 2 activity of the active site. The Carrier 3 domain occupies 3329-3407 (ERTAELVRLV…AVAGFLDAEL (79 aa)). At S3367 the chain carries O-(pantetheine 4'-phosphoryl)serine. Residues 3456-3491 (QAADASGTGANPSGDDLGEAGVDELLEALGRELDGD) form a disordered region. Residues 3471–3481 (DLGEAGVDELL) are compositionally biased toward acidic residues.

As to quaternary structure, homodimer. Erythronolide synthase is composed of EryAI, EryAII and EryAIII multimodular (2 modules) polypeptides each coding for a functional synthase subunit which participates in 2 of the six FAS-like elongation steps required for formation of the polyketide. Module 1, 2, 3, 4, 5, and 6 participating in biosynthesis steps 1, 2, 3, 4, 5, and 6, respectively. Requires pantetheine 4'-phosphate as cofactor.

The enzyme catalyses 6 (S)-methylmalonyl-CoA + propanoyl-CoA + 6 NADPH + 12 H(+) = 6-deoxyerythronolide B + 6 CO2 + 6 NADP(+) + 7 CoA + H2O. It participates in antibiotic biosynthesis; erythromycin biosynthesis. In terms of biological role, involved in the biosynthesis of antibiotic erythromycin via the biosynthesis of its aglycone precursor, 6-deoxyerythronolide B (6-dEB). The sequence is that of Erythronolide synthase EryA1 (eryA) from Saccharopolyspora erythraea (Streptomyces erythraeus).